Here is a 445-residue protein sequence, read N- to C-terminus: Ubiquitin carboxyl-terminal hydrolase MINDY-3 (445 aa).

Cysteine 51 acts as the Nucleophile in catalysis. Serine 125 carries the post-translational modification Phosphoserine. Residue histidine 287 is the Proton acceptor of the active site.

The protein belongs to the MINDY deubiquitinase family. FAM188 subfamily. Interacts with COPS5.

It is found in the nucleus. The enzyme catalyses Thiol-dependent hydrolysis of ester, thioester, amide, peptide and isopeptide bonds formed by the C-terminal Gly of ubiquitin (a 76-residue protein attached to proteins as an intracellular targeting signal).. Hydrolase that can remove 'Lys-48'-linked conjugated ubiquitin from proteins. This Bos taurus (Bovine) protein is Ubiquitin carboxyl-terminal hydrolase MINDY-3 (MINDY3).